The following is a 1621-amino-acid chain: Ferredoxin-dependent glutamate synthase, chloroplastic (1621 aa).

Residues 1 to 57 (MALQSAPKLLYSSPSPSVFSANERRVAFSDFVGLSKKRSRRRRIAGTFRNFPALSAV) constitute a chloroplast transit peptide. Cys105 serves as the catalytic Nucleophile. The Glutamine amidotransferase type-2 domain occupies 105 to 504 (CGVGFIANLD…PGMMISVDLS (400 aa)). Residue 1183-1240 (LSETHQTLISNGLRERVILRVDGGLKCGVDVMMAAAMGADEYGFGSLAMIATGCVMAR) participates in FMN binding. The [3Fe-4S] cluster site is built by Cys1236, Cys1242, and Cys1247.

Belongs to the glutamate synthase family. In terms of assembly, interacts with ferredoxin. Interacts (via FMN-binding domain) with SQD1. The cofactor is [3Fe-4S] cluster. It depends on FMN as a cofactor. Expressed in young leaves. Not detected in mature leaves.

Its subcellular location is the plastid. It is found in the chloroplast stroma. The enzyme catalyses 2 oxidized [2Fe-2S]-[ferredoxin] + 2 L-glutamate = L-glutamine + 2 reduced [2Fe-2S]-[ferredoxin] + 2-oxoglutarate + 2 H(+). The protein operates within amino-acid biosynthesis; L-glutamate biosynthesis via GLT pathway; L-glutamate from 2-oxoglutarate and L-glutamine (ferredoxin route): step 1/1. It participates in energy metabolism; nitrogen metabolism. Its activity is regulated as follows. Inhibited by N-bromosuccinimide, which is specific for modification of tryptophan residues probably involved in the electron transfer from ferredoxin. Catalyzes the reductive conversion of 2-oxoglutarate plus glutamine to two molecules of glutamate, using reduced ferredoxin as the electron donor. Contains one FMN but no FAD. The FMN-binding domain is also involved in the delivery of sulfite to the reaction center of SQD1. This Spinacia oleracea (Spinach) protein is Ferredoxin-dependent glutamate synthase, chloroplastic.